Consider the following 1185-residue polypeptide: Chromosome partition protein Smc (1185 aa).

32 to 39 (PNGSGKSN) serves as a coordination point for ATP. A coiled-coil region spans residues 228–503 (SRLVKKLTIA…LQAVQERYTN (276 aa)). Positions 300-323 (TQGQQGVDAERRQNQQSEQERLTA) are disordered. A compositionally biased stretch (basic and acidic residues) spans 307–320 (DAERRQNQQSEQER). The region spanning 519–637 (SGVAGAVSEL…VDTLDHAMAI (119 aa)) is the SMC hinge domain. Coiled-coil stretches lie at residues 675 to 928 (QQQQ…RRLE) and 989 to 1025 (AIDE…ADLD).

The protein belongs to the SMC family. As to quaternary structure, homodimer.

The protein localises to the cytoplasm. Functionally, required for chromosome condensation and partitioning. In Lactiplantibacillus plantarum (strain ATCC BAA-793 / NCIMB 8826 / WCFS1) (Lactobacillus plantarum), this protein is Chromosome partition protein Smc.